The sequence spans 763 residues: Formin-like protein 4 (763 aa).

The first 33 residues, Met1–Ser33, serve as a signal peptide directing secretion. The disordered stretch occupies residues Pro52–Asp73. A helical membrane pass occupies residues Ala80 to His100. 2 disordered regions span residues Ile185–His327 and Arg726–Met763. A compositionally biased stretch (polar residues) spans Arg205 to His225. The span at Val229–Lys238 shows a compositional bias: basic and acidic residues. The segment covering Asp240 to Leu280 has biased composition (pro residues). The span at Lys281–Lys292 shows a compositional bias: low complexity. The FH2 domain occupies Ser303–Val738. The span at Leu316–His327 shows a compositional bias: basic and acidic residues. Polar residues predominate over residues Arg726–Asn736.

Belongs to the formin-like family. Class-I subfamily. In terms of assembly, interacts with profilin. In terms of tissue distribution, expressed in the whole plant (at protein level).

It is found in the cell membrane. Its function is as follows. Might be involved in the organization and polarity of the actin cytoskeleton. This chain is Formin-like protein 4 (FH4), found in Arabidopsis thaliana (Mouse-ear cress).